Reading from the N-terminus, the 163-residue chain is MYILPEELRAELKRPLGELHRSFSDVDVGNSFLITVGDVTTRNALEHGLKPDVSIIDNRIQRRDSDHEFRDTATILRSRNPPGTVTESLWKSIEEAIEGATERGERFMIVVDGEEDLAVLPSILLAPPDTVILYGQPDEGVVLVRASETSSKAEELMKKFEEA.

Asp-38, Val-39, Asp-57, Glu-115, and Asp-138 together coordinate GTP.

Belongs to the GTP-dependent DPCK family.

The catalysed reaction is 3'-dephospho-CoA + GTP = GDP + CoA + H(+). The protein operates within cofactor biosynthesis; coenzyme A biosynthesis. Catalyzes the GTP-dependent phosphorylation of the 3'-hydroxyl group of dephosphocoenzyme A to form coenzyme A (CoA). This Methanothermobacter thermautotrophicus (strain ATCC 29096 / DSM 1053 / JCM 10044 / NBRC 100330 / Delta H) (Methanobacterium thermoautotrophicum) protein is GTP-dependent dephospho-CoA kinase.